An 809-amino-acid chain; its full sequence is MSSLPVAAVLPELLTALDCAPQVLLSAPTGAGKSTWLPLQLLAHPGINGKIILLEPRRLAARNVAQRLAELLNEKPGDTVGYRMRAQNCVGPNTRLEVVTEGVLTRMIQRDPELSGVGLVILDEFHERSLQADLALALLLDVQQGLRDDLKLLIMSATLDNDRLQQMLPEAPVVISEGRSFPVERRYLPLPAHQRFDDAVAVATAEMLRQESGSLLLFLPGVGEIQRVQEQLASRIGSDVLLCPLYGALSLNDQRKAILPAPQGMRKVVLATNIAETSLTIEGIRLVVDCAQERVARFDPRTGLTRLITQRVSQASMTQRAGRAGRLEPGISLHLIAKEQAERAAAQSEPEILQSDLSGLLMELLQWGCSDPAQMSWLDQPPVVNLLAAKRLLQMLGALEGERLSAQGQKMAALGNDPRLAAMLVSAKNDDEAATAAKIAAILEEPPRMGNSDLGVAFSRNQPAWQQRSQQLLKRLNVRGGEADSSLIAPLLAGAFADRIARRRGQDGRYQLANGMGAMLDANDALSRHEWLIAPLLLQGSASPDARILLALLVDIDELVQRCPQLVQQSDTVEWDDAQGTLKAWRRLQIGQLTVKVQPLAKPSEDELHQAMLNGIRDKGLSVLNWTAEAEQLRLRLLCAAKWLPEYDWPAVDDESLLAALETWLLPHMTGVHSLRGLKSLDIYQALRGLLDWGMQQRLDSELPAHYTVPTGSRIAIRYHEDNPPALAVRMQEMFGEATNPTIAQGRVPLVLELLSPAQRPLQITRDLSDFWKGAYREVQKEMKGRYPKHVWPDDPANTAPTRRTKKYS.

The Helicase ATP-binding domain maps to 14 to 177; the sequence is LTALDCAPQV…LPEAPVVISE (164 aa). 27–34 contacts ATP; it reads APTGAGKS. The short motif at 123 to 126 is the DEFH box element; the sequence is DEFH. Residues 195 to 368 enclose the Helicase C-terminal domain; that stretch reads RFDDAVAVAT…GLLMELLQWG (174 aa). The disordered stretch occupies residues 788–809; that stretch reads PKHVWPDDPANTAPTRRTKKYS.

It belongs to the DEAD box helicase family.

It catalyses the reaction ATP + H2O = ADP + phosphate + H(+). The protein is ATP-dependent RNA helicase HrpB (hrpB) of Escherichia coli (strain K12).